Consider the following 111-residue polypeptide: Probable 4-amino-4-deoxy-L-arabinose-phosphoundecaprenol flippase subunit ArnE (111 aa).

3 consecutive transmembrane segments (helical) span residues 38-58, 61-81, and 91-111; these read LWLGLALICMGAAMVLWLLVL, LPVGIAYPMLSLNFVWVTLAA, and PRHWLGVALIISGIIILGSAA. The EamA domain occupies 40–109; it reads LGLALICMGA…IISGIIILGS (70 aa).

It belongs to the ArnE family. As to quaternary structure, heterodimer of ArnE and ArnF.

Its subcellular location is the cell inner membrane. Its pathway is bacterial outer membrane biogenesis; lipopolysaccharide biosynthesis. In terms of biological role, translocates 4-amino-4-deoxy-L-arabinose-phosphoundecaprenol (alpha-L-Ara4N-phosphoundecaprenol) from the cytoplasmic to the periplasmic side of the inner membrane. The chain is Probable 4-amino-4-deoxy-L-arabinose-phosphoundecaprenol flippase subunit ArnE from Salmonella newport (strain SL254).